We begin with the raw amino-acid sequence, 577 residues long: MNIQTLLNQRIQAAMVAAGASDTAQALVRQSAKVQFGDYQANGIMGAAKALKMNPCDFAQATLDKLDLSDLAEKVEIAGPGFINIFLKNVWLSKELTQLRTSERLDVNPVDAPETVVVDYSSPNLAKEMHVGHLRSTVIGDAVVRTLEFFGHHVVRQNHVGDWGTQFGMLLAYMERLRSENATISMALSDLETFYRAAKTCFDEDEAFATRSRELVVALQSGDEECLALWDEFINISLTHCEETYKMLGVSLERQHVMPESAYNDDLANVVNELKEQGLLQESNGAQCVFMEEFANKEGEITPIIVQKTGGGFLYATTDLAAVRFRQHTLNANRVLYFVDARQSLHFQQIFTLSRKAGFVKPETQLEHMPFGTVMGSDGKPFKTRSGGVAKLSSLLEEAQERAYQLVASKNPEMDEEELRNIGRVVGIASVKYADLSKNRTSDYVFNWDSMLSFEGNTAPYLLYAYSRVASIVKRSEIDVVNLTGEISIDEPQERALAVKLCQFEEAIQQVANDGMPHFLCAYLYDLAGTFMTFYEACPILNAEDEVKHSRLQLALNTASTLKLGLSLLGIETLERM.

Residues 123–133 (PNLAKEMHVGH) carry the 'HIGH' region motif.

The protein belongs to the class-I aminoacyl-tRNA synthetase family. In terms of assembly, monomer.

It localises to the cytoplasm. The catalysed reaction is tRNA(Arg) + L-arginine + ATP = L-arginyl-tRNA(Arg) + AMP + diphosphate. The protein is Arginine--tRNA ligase of Marinomonas sp. (strain MWYL1).